The chain runs to 598 residues: Elongation factor 4 (598 aa).

A tr-type G domain is found at 4–186 (INIRNFAIIA…AIVSRLPAPS (183 aa)). GTP contacts are provided by residues 16–21 (DHGKST) and 133–136 (NKID).

It belongs to the TRAFAC class translation factor GTPase superfamily. Classic translation factor GTPase family. LepA subfamily.

It localises to the cell inner membrane. The enzyme catalyses GTP + H2O = GDP + phosphate + H(+). In terms of biological role, required for accurate and efficient protein synthesis under certain stress conditions. May act as a fidelity factor of the translation reaction, by catalyzing a one-codon backward translocation of tRNAs on improperly translocated ribosomes. Back-translocation proceeds from a post-translocation (POST) complex to a pre-translocation (PRE) complex, thus giving elongation factor G a second chance to translocate the tRNAs correctly. Binds to ribosomes in a GTP-dependent manner. The protein is Elongation factor 4 of Ehrlichia ruminantium (strain Gardel).